Reading from the N-terminus, the 132-residue chain is Replication enhancer protein (132 aa).

This sequence belongs to the geminiviridae replication enhancer protein family. As to quaternary structure, homooligomer. Interacts with the replication-associated protein (REP). Interacts with host proliferating cell nuclear antigen (PCNA). Interacts with host retinoblastoma-related protein 1 (RBR1), and may thereby deregulate the host cell cycle. Oligomerization and interaction with PCNA are necessary for optimal replication enhancement.

In terms of biological role, increases viral DNA accumulation. Enhances infectivity and symptom expression. The chain is Replication enhancer protein from Pepper huasteco yellow vein virus (PHYVV).